Here is a 91-residue protein sequence, read N- to C-terminus: uncharacterized protein (91 aa).

Transmembrane regions (helical) follow at residues 10–30 and 46–66; these read VLFT…AGGI and LLVA…QALS. A disordered region spans residues 68–91; the sequence is MRRQDGARGTARAGRNSARRRMPS.

It is found in the cell membrane. This is an uncharacterized protein from Sinorhizobium fredii (strain NBRC 101917 / NGR234).